The sequence spans 304 residues: MARPYEGKLAIVTGASRGIGAAVARRLAAKGSNVLITFTSDSSRDLTRGLVEELSSKHGVHVQSVQTDLAKASTAAPIIVEAARTLFDSYSPPSGGKKFQVDILINNAGVSSNQFLNDPEKGAIDEAEFTRVYAINVLAPLLLTQAVAPHLPADRSGRIVNVSSVSASIGYLGQSVYAGSKGALEVMTRTWARELAERATVNSVNPGPAWGDMYAEAGPTFWRRNQPYVDAAPLMAYDGEEDVLRRAGGEADKFDRLVREQMGGRRPGFADEIAGTVDMLCTEESGWTTGSVVCANGGMRMSIA.

NADP(+) contacts are provided by Ile19, Asp68, and Asn107. Residues Ser163 and Ser164 each act as proton donor in the active site. NADP(+) contacts are provided by Tyr177, Lys181, and Ala209. Tyr177 (proton acceptor) is an active-site residue. Lys181 acts as the Lowers pKa of active site Tyr in catalysis.

It belongs to the short-chain dehydrogenases/reductases (SDR) family.

It carries out the reaction D-sorbitol + NADP(+) = L-xylo-3-hexulose + NADPH + H(+). The protein operates within carbohydrate degradation. Its function is as follows. L-xylulose reductase involved in the catabolism of D-galactose through an oxidoreductive pathway. Catalyzes the NADPH-dependent reduction of L-xylo-3-hexulose. Is also active with D-ribulose and L-xylulose, and to a lesser extent with D-xylulose, D-fructose and L- and D-sorbose. In the reverse reaction, shows activity with D-sorbitol and D-mannitol, low activity with xylitol, but no activity with galactitol, ribitol, and L- and D-arabitol. The protein is L-xylo-3-hexulose reductase of Hypocrea jecorina (strain QM6a) (Trichoderma reesei).